Reading from the N-terminus, the 49-residue chain is MRVGITLACSECKQRNYMTTRDKKKQNEKIEKKKYCRFCNTHTLHKEIK.

It belongs to the bacterial ribosomal protein bL33 family.

This chain is Large ribosomal subunit protein bL33, found in Syntrophomonas wolfei subsp. wolfei (strain DSM 2245B / Goettingen).